The chain runs to 521 residues: Serine/threonine-protein kinase A (521 aa).

Positions 15–289 (YQLVELVGSG…DVIIRAIDAI (275 aa)) constitute a Protein kinase domain. ATP contacts are provided by residues 21-29 (VGSGAMGQV) and Lys-45. Residue Asp-148 is the Proton acceptor of the active site.

The protein belongs to the protein kinase superfamily. Ser/Thr protein kinase family. Autophosphorylated.

It carries out the reaction L-seryl-[protein] + ATP = O-phospho-L-seryl-[protein] + ADP + H(+). The catalysed reaction is L-threonyl-[protein] + ATP = O-phospho-L-threonyl-[protein] + ADP + H(+). In terms of biological role, protein kinase that regulates cellular motility via phosphorylation of membrane proteins. This Synechocystis sp. (strain ATCC 27184 / PCC 6803 / Kazusa) protein is Serine/threonine-protein kinase A (spkA).